Here is a 272-residue protein sequence, read N- to C-terminus: 27-O-demethylrifamycin SV methyltransferase (272 aa).

Residues Ser-89, Gln-94, 117 to 118, Leu-134, and His-139 each bind S-adenosyl-L-methionine; that span reads DA.

This sequence belongs to the class I-like SAM-binding methyltransferase superfamily. In terms of assembly, exists probably as a trimer.

The catalysed reaction is 27-O-demethylrifamycin SV + S-adenosyl-L-methionine = rifamycin SV + S-adenosyl-L-homocysteine + H(+). It participates in antibiotic biosynthesis; rifamycin B biosynthesis. Its activity is regulated as follows. Slightly inhibited by Ca(2+) and Mg(2+). Strongly inhibited by Zn(2+), Ni(2+) and Co(2+). Functionally, catalyzes the methylation of 27-O-demethylrifamycin SV (DMRSV) to rifamycin SV. The sequence is that of 27-O-demethylrifamycin SV methyltransferase from Amycolatopsis mediterranei (strain S699) (Nocardia mediterranei).